The chain runs to 304 residues: Probable cobalamin biosynthesis protein CobD (304 aa).

5 helical membrane-spanning segments follow: residues 2–22 (IVVLIGALSIDIIFGEPKEYI), 50–70 (ILFSIAVIVLTAIPYFLAVYL), 73–93 (FILVVYVVVSMVILKTTFSIT), 147–167 (VDGYITPLFFFVFFGLPGAFI), and 284–304 (AAYSYIVIFVLPLLVIMAVFL).

The protein belongs to the CobD/CbiB family.

It localises to the cell membrane. The protein operates within cofactor biosynthesis; adenosylcobalamin biosynthesis. Functionally, converts cobyric acid to cobinamide by the addition of aminopropanol on the F carboxylic group. This is Probable cobalamin biosynthesis protein CobD from Thermoplasma volcanium (strain ATCC 51530 / DSM 4299 / JCM 9571 / NBRC 15438 / GSS1).